The following is a 332-amino-acid chain: DNA-directed RNA polymerase subunit alpha (332 aa).

Residues 1-231 (MQTNLLKPKT…EQLAVFAQLD (231 aa)) form an alpha N-terminal domain (alpha-NTD) region. The interval 252-332 (FDPILLRPVD…NWPPAGLEKR (81 aa)) is alpha C-terminal domain (alpha-CTD).

It belongs to the RNA polymerase alpha chain family. In terms of assembly, homodimer. The RNAP catalytic core consists of 2 alpha, 1 beta, 1 beta' and 1 omega subunit. When a sigma factor is associated with the core the holoenzyme is formed, which can initiate transcription.

The enzyme catalyses RNA(n) + a ribonucleoside 5'-triphosphate = RNA(n+1) + diphosphate. In terms of biological role, DNA-dependent RNA polymerase catalyzes the transcription of DNA into RNA using the four ribonucleoside triphosphates as substrates. In Delftia acidovorans (strain DSM 14801 / SPH-1), this protein is DNA-directed RNA polymerase subunit alpha.